Reading from the N-terminus, the 683-residue chain is MLATDSTPALLAASVVLAVSLVSYVIQLNRSRTHRAFWASHPWVGVRDEWFSGARTKLRIVTSVREMVEDGFHRFSQFKTAFALPNIGEPPWLVLPPASLREFLAKPDADLDHNIIHEEQLQNYYTQGALGHHAATIPLQFDVVRRQLTRELPLVAAALHDELHKSFQDYWGTDTIAAKQIDLLATCFKIVTRTANRVFIGADICRSEAFLEHLRRYSDAVGRAGIIIRLFPRWLRPVVTPAVTVWYRRDLAVCREICVPVIRCRVQQTIEKRKDVDCTWKAPVDVLQWLIEAALRRNDAAELDPLLLTQRLLMLNFVSIETTSMAITHAIADLYGSADADSFIAGLQEECERALPHGELWTKAQLDNLVRIDSAIRESMRVSDFSHIQLPRLVANPHGVDFQSTGNPPLHVPPGIRLCVPAHSIHRDPALYPDPLTYNAFRFVIEPSVGAGDATEPAPKQASLATTTDSFLVFGHGRHACPGRFFAAHLMKLMLAYIVRHYDVARLTQPVDKQTTECTKAPFHMEYGGGPLAYMGHSLTGATRLQDTLCFMKFDSSQYLDTSPIVTIPSYIYWPSLNTMNQSSKYSLYVFVVLVACVAALFIGIGIYQMYHPLDRDNAAYREVPHEQRAYMRKAGSPPAFSKFIYRLYCPNIQWKVKRCIGVLFLLFAYYNSRLRLSSATKN.

A helical transmembrane segment spans residues P8 to L28. N29 carries N-linked (GlcNAc...) asparagine glycosylation. Position 481 (C481) interacts with heme. N581 is a glycosylation site (N-linked (GlcNAc...) asparagine). The helical transmembrane segment at L588 to Y608 threads the bilayer.

It belongs to the cytochrome P450 family. Heme is required as a cofactor.

The protein localises to the membrane. Its pathway is antifungal biosynthesis. Functionally, cytochrome P450 monooxygenase; part of the gene cluster that mediates the de novo generation of L-homotyrosine from acetyl-CoA and 4-hydroxyphenyl-pyruvate. L-homotyrosine is a building block of echinocandin B, a fungal lipidated cyclic hexapeptide that acts as an antifungal agent. L-homotyrosine 4-hydroxyphenyl-pyruvate first undergoes an aldol-type condensation by htyA with the C-2 of acetyl-CoA followed by the release of CoA to form 2-(4-hydroxybenzyl)-malate. This is followed by isomerization of 2-(4-hydroxy-benzyl)-malate to 3-(4-hydroxybenzyl)-malate by htyD. Thereafter, 3-(4-hydroxybenzyl)-malate undergoes decarboxylation and oxidation to form 2-oxo-4-(4-hydroxybenzyl)butanoic acid, coupled to reduction of NAD(+) to NADH by htyC. The product then undergoes transamination catalyzed by htyB to form L-homotyrosine. The chain is Cytochrome P450 monooxygenase htyF from Aspergillus rugulosus (Emericella rugulosa).